A 155-amino-acid chain; its full sequence is 3-hydroxyacyl-[acyl-carrier-protein] dehydratase FabZ (155 aa).

The active site involves His-58.

Belongs to the thioester dehydratase family. FabZ subfamily.

The protein localises to the cytoplasm. The enzyme catalyses a (3R)-hydroxyacyl-[ACP] = a (2E)-enoyl-[ACP] + H2O. In terms of biological role, involved in unsaturated fatty acids biosynthesis. Catalyzes the dehydration of short chain beta-hydroxyacyl-ACPs and long chain saturated and unsaturated beta-hydroxyacyl-ACPs. The chain is 3-hydroxyacyl-[acyl-carrier-protein] dehydratase FabZ from Alkalilimnicola ehrlichii (strain ATCC BAA-1101 / DSM 17681 / MLHE-1).